Consider the following 398-residue polypeptide: LIM domain-binding protein 2 (398 aa).

Disordered stretches follow at residues 245–280 and 354–398; these read PPAE…TSAY and DAAN…QASQ. The segment covering 263–279 has biased composition (low complexity); the sequence is STNNASNSNAGNNATSA. Residues 323 to 362 enclose the LIM interaction domain (LID) domain; that stretch reads DVMVVGEPTLMGGEFGDEDERLITRLENTQYDAANGMDDE.

Belongs to the LDB family. In terms of tissue distribution, expressed in adult brain, lung, spleen and kidney. Isoform b is generally expressed at a higher level than isoform a.

Its subcellular location is the nucleus. Functionally, binds to the LIM domain of a wide variety of LIM domain-containing transcription factors. The polypeptide is LIM domain-binding protein 2 (Xenopus laevis (African clawed frog)).